Consider the following 118-residue polypeptide: UPF0212 protein HQ_2663A (118 aa).

The protein belongs to the UPF0212 family.

In Haloquadratum walsbyi (strain DSM 16790 / HBSQ001), this protein is UPF0212 protein HQ_2663A.